Reading from the N-terminus, the 568-residue chain is Proline--tRNA ligase (568 aa).

The protein belongs to the class-II aminoacyl-tRNA synthetase family. ProS type 1 subfamily. In terms of assembly, homodimer.

It localises to the cytoplasm. The catalysed reaction is tRNA(Pro) + L-proline + ATP = L-prolyl-tRNA(Pro) + AMP + diphosphate. In terms of biological role, catalyzes the attachment of proline to tRNA(Pro) in a two-step reaction: proline is first activated by ATP to form Pro-AMP and then transferred to the acceptor end of tRNA(Pro). As ProRS can inadvertently accommodate and process non-cognate amino acids such as alanine and cysteine, to avoid such errors it has two additional distinct editing activities against alanine. One activity is designated as 'pretransfer' editing and involves the tRNA(Pro)-independent hydrolysis of activated Ala-AMP. The other activity is designated 'posttransfer' editing and involves deacylation of mischarged Ala-tRNA(Pro). The misacylated Cys-tRNA(Pro) is not edited by ProRS. The sequence is that of Proline--tRNA ligase from Listeria monocytogenes serovar 1/2a (strain ATCC BAA-679 / EGD-e).